The sequence spans 553 residues: Solute carrier family 45 member 3 (553 aa).

The next 11 helical transmembrane spans lie at 19 to 39 (LLIN…ITYV), 52 to 72 (FMTM…PLLG), 88 to 108 (FIWA…RAGW), 120 to 140 (LELA…QVCF), 161 to 181 (YSVY…LPAI), 198 to 218 (CLFG…LLVA), 275 to 295 (FVAE…YTDF), 323 to 343 (MGSL…LVMD), 353 to 373 (AVYL…CLSH), 382 to 402 (AALT…LASL), and 522 to 542 (AYMV…TQVV).

The protein belongs to the glycoside-pentoside-hexuronide (GPH) cation symporter transporter (TC 2.A.2) family.

The protein resides in the membrane. It catalyses the reaction sucrose(out) + H(+)(out) = sucrose(in) + H(+)(in). In terms of biological role, proton-associated sucrose transporter. May be able to transport also glucose and fructose. The chain is Solute carrier family 45 member 3 (SLC45A3) from Macaca fascicularis (Crab-eating macaque).